Reading from the N-terminus, the 397-residue chain is Probable peptidoglycan glycosyltransferase FtsW (397 aa).

Residues 1–30 (MYGLEMLEKIKLEYDKWACLTPKNSLYDRT) lie on the Cytoplasmic side of the membrane. Residues 31 to 51 (LVWLFLSLLMIGFIMVTSASI) form a helical membrane-spanning segment. At 52–61 (PVSTRLNNDP) the chain is on the periplasmic side. The chain crosses the membrane as a helical span at residues 62–82 (FHFAIRDSIYLACSLLAFAFV). At 83 to 94 (VKIPMRNWEKYN) the chain is on the cytoplasmic side. Residues 95 to 115 (VPLFLLSLLFLASVLIFGRSV) form a helical membrane-spanning segment. At 116–126 (NGSIRWIQLGP) the chain is on the periplasmic side. Residues 127 to 146 (INFQPAELSKLAIICYFSSF) traverse the membrane as a helical segment. The Cytoplasmic segment spans residues 147 to 158 (YVRKYDEMRNRS). 2 consecutive transmembrane segments (helical) span residues 159 to 179 (ASVIRPMVILFLFSSLLLLQP) and 180 to 200 (DLGSVVVLFVLTFTMLFIMGA). Lysine 201 is a topological domain (cytoplasmic). The helical transmembrane segment at 202 to 222 (VMQFLLLIVTASVSFILLVLT) threads the bilayer. Residues 223 to 280 (SEYRLKRVTSFLDPFADAYGDGFQLSNAQMAFGQGQLWGQGLGNSVQKLEYLPEAHTD) lie on the Periplasmic side of the membrane. The chain crosses the membrane as a helical span at residues 281-301 (FVMAVVAEEFGFIGIIFMVVL). Topologically, residues 302–325 (LLCLSFRAIKISRDALKLEARFRG) are cytoplasmic. Residues 326–346 (FFAFGVAIWVFLQGSVNLGVA) form a helical membrane-spanning segment. Residues 347–356 (SGALPTKGLT) lie on the Periplasmic side of the membrane. The chain crosses the membrane as a helical span at residues 357–377 (FPLVSYGGSSLVIMSVAIAIL). Topologically, residues 378 to 397 (LRIDYENRLTRVGHAQIKEP) are cytoplasmic.

The protein belongs to the SEDS family. FtsW subfamily.

It localises to the cell inner membrane. The enzyme catalyses [GlcNAc-(1-&gt;4)-Mur2Ac(oyl-L-Ala-gamma-D-Glu-L-Lys-D-Ala-D-Ala)](n)-di-trans,octa-cis-undecaprenyl diphosphate + beta-D-GlcNAc-(1-&gt;4)-Mur2Ac(oyl-L-Ala-gamma-D-Glu-L-Lys-D-Ala-D-Ala)-di-trans,octa-cis-undecaprenyl diphosphate = [GlcNAc-(1-&gt;4)-Mur2Ac(oyl-L-Ala-gamma-D-Glu-L-Lys-D-Ala-D-Ala)](n+1)-di-trans,octa-cis-undecaprenyl diphosphate + di-trans,octa-cis-undecaprenyl diphosphate + H(+). Its pathway is cell wall biogenesis; peptidoglycan biosynthesis. Peptidoglycan polymerase that is essential for cell division. This is Probable peptidoglycan glycosyltransferase FtsW from Haemophilus ducreyi (strain 35000HP / ATCC 700724).